The sequence spans 375 residues: Chaperone protein DnaJ (375 aa).

The J domain occupies 4–69; it reads DLYETLGVQK…QKRAAYDRYG (66 aa). The segment at 133–211 adopts a CR-type zinc-finger fold; the sequence is GKTAQIRVPT…CHGQGRVVEE (79 aa). Residues C146, C149, C163, C166, C185, C188, C199, and C202 each coordinate Zn(2+). CXXCXGXG motif repeat units follow at residues 146-153, 163-170, 185-192, and 199-206; these read CDVCTGTG, CGTCQGTG, CPTCGGRG, and CTKCHGQG.

This sequence belongs to the DnaJ family. Homodimer. Zn(2+) serves as cofactor.

It is found in the cytoplasm. Functionally, participates actively in the response to hyperosmotic and heat shock by preventing the aggregation of stress-denatured proteins and by disaggregating proteins, also in an autonomous, DnaK-independent fashion. Unfolded proteins bind initially to DnaJ; upon interaction with the DnaJ-bound protein, DnaK hydrolyzes its bound ATP, resulting in the formation of a stable complex. GrpE releases ADP from DnaK; ATP binding to DnaK triggers the release of the substrate protein, thus completing the reaction cycle. Several rounds of ATP-dependent interactions between DnaJ, DnaK and GrpE are required for fully efficient folding. Also involved, together with DnaK and GrpE, in the DNA replication of plasmids through activation of initiation proteins. This chain is Chaperone protein DnaJ, found in Sinorhizobium medicae (strain WSM419) (Ensifer medicae).